Reading from the N-terminus, the 104-residue chain is Large ribosomal subunit protein bL21 (104 aa).

The protein belongs to the bacterial ribosomal protein bL21 family. As to quaternary structure, part of the 50S ribosomal subunit. Contacts protein L20.

This protein binds to 23S rRNA in the presence of protein L20. This chain is Large ribosomal subunit protein bL21, found in Thermodesulfovibrio yellowstonii (strain ATCC 51303 / DSM 11347 / YP87).